The sequence spans 284 residues: Pantothenate synthetase (284 aa).

Residue 32–39 participates in ATP binding; sequence MGALHEGH. His39 acts as the Proton donor in catalysis. Gln63 serves as a coordination point for (R)-pantoate. Gln63 is a binding site for beta-alanine. Residue 149-152 participates in ATP binding; it reads GEKD. Gln155 is a (R)-pantoate binding site. ATP is bound by residues Val178 and 186-189; that span reads LSSR.

This sequence belongs to the pantothenate synthetase family. Homodimer.

Its subcellular location is the cytoplasm. It carries out the reaction (R)-pantoate + beta-alanine + ATP = (R)-pantothenate + AMP + diphosphate + H(+). The protein operates within cofactor biosynthesis; (R)-pantothenate biosynthesis; (R)-pantothenate from (R)-pantoate and beta-alanine: step 1/1. Its function is as follows. Catalyzes the condensation of pantoate with beta-alanine in an ATP-dependent reaction via a pantoyl-adenylate intermediate. The polypeptide is Pantothenate synthetase (Chelativorans sp. (strain BNC1)).